The sequence spans 601 residues: Elongation factor 4 (601 aa).

The tr-type G domain occupies 6 to 188 (SHIRNFSIIA…QIVHRVPAPE (183 aa)). GTP-binding positions include 18 to 23 (DHGKST) and 135 to 138 (NKID).

This sequence belongs to the TRAFAC class translation factor GTPase superfamily. Classic translation factor GTPase family. LepA subfamily.

It is found in the cell inner membrane. It catalyses the reaction GTP + H2O = GDP + phosphate + H(+). Required for accurate and efficient protein synthesis under certain stress conditions. May act as a fidelity factor of the translation reaction, by catalyzing a one-codon backward translocation of tRNAs on improperly translocated ribosomes. Back-translocation proceeds from a post-translocation (POST) complex to a pre-translocation (PRE) complex, thus giving elongation factor G a second chance to translocate the tRNAs correctly. Binds to ribosomes in a GTP-dependent manner. The polypeptide is Elongation factor 4 (Anaeromyxobacter sp. (strain K)).